The chain runs to 890 residues: MTQYTPMIQQYLKVKADYQDAFLFFRLGDFYEMFFEDAVKAAHELEITLTSRDGGSSERIPMCGVPHHAAKNYIEQLVEKGYKVAVCEQVEDPKTAKGVVRREVVQLITPGTMMEGRTIDEKENNFLAALTHFEDGSYALACNDLTTGQNTVTLLTGSVEDILLEVYATGSKEIVVDSTFSKDELNKLTETLKMTISYEDTTTIPEGLEHLVKSVSQAKLIKAIGRLFNYVIRTQKRSLDHLQPVEIYYTNQFMKIDVHSKRNLELTETLRTKEKTGSLLWLLDKTKTAMGGRMLKQWMERPLIQKEKVEERLEMVETFVNDYFLREDLKEKLKEVYDLERLAGKVAFGNVNARDLLQLRRSLLQVPAILEAISLLDNAYAARLIQGADPCESLTELLGRSIQENPPLSIKDGDIIKDGYNDKLDQYRYVSKNGKTWIAELEKRERDITGVKSLKIGYNRIFGYYIEVTKANLGALPEGRYERKQTLANAERFITDELKEKETLILEAEEKIVQLEYDLFTALREEVKVFIPKLQHLAKVISELDVLQSFATVSEEEQFVKPVLTNKREIFIKDGRHPVVEKVLNGKLYVPNDCIMPEKMDVFLITGPNMSGKSTYMRQLALVTVMSQIGCFVPATEAVLPVFDQIFTRIGAADDLISGQSTFMVEMLEAKNAIANASERSLILFDEIGRGTSTYDGMALAQAIIEHIHDQIGAKTLFSTHYHELTVLEESLDQLKNVHVSAIEENGKVVFLHKIQDGAADKSYGIHVAQLAELPESLIARAKEVLAQLEGQEEIVIPKRVEVKVPEVAPEPVVVKEEPAEIQETKVETEEESQLSFFGGEQSSKKQDKSVLDAKETAVLAQIKKIDLLDMTPLEAMNELYRLQKKLKKG.

607–614 (GPNMSGKS) serves as a coordination point for ATP.

It belongs to the DNA mismatch repair MutS family.

Its function is as follows. This protein is involved in the repair of mismatches in DNA. It is possible that it carries out the mismatch recognition step. This protein has a weak ATPase activity. The polypeptide is DNA mismatch repair protein MutS (Bacillus mycoides (strain KBAB4) (Bacillus weihenstephanensis)).